We begin with the raw amino-acid sequence, 366 residues long: Trans-enoyl reductase caaB (366 aa).

The 345-residue stretch at 19-363 folds into the Enoyl reductase (ER) domain; the sequence is GAGQLSIYHD…RQTVSGHKLV (345 aa). Y219 contributes to the NADP(+) binding site.

This sequence belongs to the zinc-containing alcohol dehydrogenase family. Monomer.

It functions in the pathway secondary metabolite biosynthesis. In terms of biological role, trans-enoyl reductase; part of the gene cluster that produces the acyltetronic acid derivatives carlosic acid, agglomerin F and carlosic acid methyl ether. The PKS domains of caaA condenses two malonyl-CoAs into an acetyl starter unit, and form 1,3-diketohexanyl-ACP with the help of the trans-enoyl reductase caaB. Next, the C domain of caaA forms the ester bond between the acyl chain and L-malic acid (derived from the TCA cycle) and accepted by the A domain instead of an amino acid. Finally, the terminal reductase/Dieckmann cyclization (R/DKC) domain cyclizes the intermediate and releases the product as carlosic acid. Decarboxylation of carlosic acid followed by formation of the exocyclic double bond is likely to be catalyzed by the cytochrome P450 monooxygenase caaC. Thus, decarboxylation and oxidation would be coupled (performed by one enzyme) through concomitant abstraction of the hydrogen at C-4. Finally, sequential oxidations of the terminal C-10 methyl group to form carboxylic acid would be catalyzed by the 2-oxoglutarate-dependent dioxygenase caaD, which is required for the biosynthesis of agglomerin F. The protein is Trans-enoyl reductase caaB of Aspergillus niger (strain ATCC MYA-4892 / CBS 513.88 / FGSC A1513).